Here is a 1051-residue protein sequence, read N- to C-terminus: Transcription intermediary factor 1-alpha (1051 aa).

The interval 1–42 (MEVAVEKAAAAAAPAGGPAAAAPSGENEAESRQGPDSESGGE) is disordered. A Glycyl lysine isopeptide (Lys-Gly) (interchain with G-Cter in SUMO2) cross-link involves residue Lys-7. Low complexity predominate over residues 8 to 23 (AAAAAAPAGGPAAAAP). Residues 52-77 (CAVCHQNIQSRVPKLLPCLHSFCQRC) form an RING-type zinc finger. Positions 94–115 (SAETPPPAPAPAPAPGSPAGGP) are disordered. Thr-97 carries the phosphothreonine modification. Positions 97-109 (TPPPAPAPAPAPG) are enriched in pro residues. Ser-110 bears the Phosphoserine mark. B box-type zinc fingers lie at residues 158-211 (KSNQ…VSPE) and 218-259 (QRPV…YQFI). The Zn(2+) site is built by Cys-163, Cys-166, Cys-187, and His-200. Lys-205 participates in a covalent cross-link: Glycyl lysine isopeptide (Lys-Gly) (interchain with G-Cter in SUMO2). Zn(2+) contacts are provided by Cys-223, His-226, Cys-246, and His-251. Lys-276 participates in a covalent cross-link: Glycyl lysine isopeptide (Lys-Gly) (interchain with G-Cter in SUMO2). Residues 289–359 (NQIQNRIIEI…AGLSKQLEHV (71 aa)) adopt a coiled-coil conformation. The tract at residues 429–457 (ESQPQMPKQNPVVEQSSQPPGGLPSNQLS) is disordered. Residues 431–457 (QPQMPKQNPVVEQSSQPPGGLPSNQLS) are compositionally biased toward polar residues. Glycyl lysine isopeptide (Lys-Gly) (interchain with G-Cter in SUMO2) cross-links involve residues Lys-436 and Lys-458. Arg-469 carries the omega-N-methylarginine modification. Composition is skewed to low complexity over residues 479–490 (AQRQQVQRRPAP) and 501–510 (PIQQPSISHQ). The tract at residues 479-551 (AQRQQVQRRP…PSQNVPRQTT (73 aa)) is disordered. Residues 526–535 (PNGPVLPPYP) show a composition bias toward pro residues. Residues 538–551 (LRYSPSQNVPRQTT) show a composition bias toward polar residues. Glycyl lysine isopeptide (Lys-Gly) (interchain with G-Cter in SUMO2) cross-links involve residues Lys-553 and Lys-642. The disordered stretch occupies residues 644–713 (TGVDHAQPRP…PAGADSTHKV (70 aa)). 3 positions are modified to phosphoserine: Ser-655, Ser-661, and Ser-668. The segment covering 655 to 667 (SNRTVQSPNSSVP) has biased composition (polar residues). Residues 686–708 (SPSASSVGSRGSSGSSSKPAGAD) show a composition bias toward low complexity. Glycyl lysine isopeptide (Lys-Gly) (interchain with G-Cter in SUMO2) cross-links involve residues Lys-703 and Lys-712. Residues Lys-724 and Lys-742 each participate in a glycyl lysine isopeptide (Lys-Gly) (interchain with G-Cter in SUMO); alternate cross-link. A Glycyl lysine isopeptide (Lys-Gly) (interchain with G-Cter in SUMO1); alternate cross-link involves residue Lys-724. Glycyl lysine isopeptide (Lys-Gly) (interchain with G-Cter in SUMO2); alternate cross-links involve residues Lys-724 and Lys-742. Residues Ser-745 and Ser-769 each carry the phosphoserine modification. Residues 755–780 (NYPRSILTSLLLNSSQSSASEETVLR) form a nuclear receptor binding site (NRBS) region. The tract at residues 771-827 (SSASEETVLRSDAPDSTGDQPGLHQENSSNGKSEWSDASQKSPVHVGETRKEDDPNE) is disordered. Polar residues predominate over residues 795-812 (QENSSNGKSEWSDASQKS). Lys-802 is covalently cross-linked (Glycyl lysine isopeptide (Lys-Gly) (interchain with G-Cter in SUMO2)). Ser-809 is modified (phosphoserine). Residue Lys-811 forms a Glycyl lysine isopeptide (Lys-Gly) (interchain with G-Cter in SUMO2) linkage. Ser-812 bears the Phosphoserine mark. The residue at position 819 (Thr-819) is a Phosphothreonine. Residues 827–874 (EDWCAVCQNGGELLCCEKCPKVFHLTCHVPTLTNFPSGEWICTFCRDL) form a PHD-type zinc finger. The interaction with histone H3 that is not methylated at 'Lys-4' (H3K4me0) stretch occupies residues 835 to 841 (NGGELLC). Lys-876 is covalently cross-linked (Glycyl lysine isopeptide (Lys-Gly) (interchain with G-Cter in SUMO2)). Residues 892-908 (KRKSEGLTKLTPIDKRK) carry the Nuclear localization signal motif. Residues 900-1005 (KLTPIDKRKC…SYFEELLKNL (106 aa)) enclose the Bromo domain. Glycyl lysine isopeptide (Lys-Gly) (interchain with G-Cter in SUMO2) cross-links involve residues Lys-950 and Lys-993. Residues 1024 to 1051 (KFSDDSDDDFVQPRKKRLKSTEDRQLLK) are disordered. Phosphoserine occurs at positions 1026 and 1029. Lys-1042 is covalently cross-linked (Glycyl lysine isopeptide (Lys-Gly) (interchain with G-Cter in SUMO2)). Positions 1042–1051 (KSTEDRQLLK) are enriched in basic and acidic residues. Ser-1043 bears the Phosphoserine mark.

Interacts (via bromo domain) with histone H3 (via N-terminus), provided that it is not methylated at 'Lys-4' (H3K4me0). Does not interact with histone H3 that is methylated at 'Lys-4' (H3K4me1, H3K4me2 or H3K4me3). Interacts (via bromo domain) with histone H3 (via N-terminus) that is acetylated at 'Lys-23' (H3K23ac). Has the highest affinity for histone H3 that is both unmodified at 'Lys-4' (H3K4me0) and acetylated at 'Lys-23' (H3K23ac). Has very low affinity for histone H3 that is methylated at 'Lys-9' (H3K9me), or acetylated at both 'Lys-9' (H3K9ac) and 'Lys-14' (H3K14ac), or acetylated at 'Lys-27' (H3K27ac) (in vitro). Interacts with TRIM16. Interacts with NR3C2/MCR. Interacts with the ligand-binding domain of estrogen receptors (in vitro). Interaction with DNA-bound estrogen receptors requires the presence of estradiol. Interacts with AR, CARM1, KAT5/TIP60, NCOA2/GRIP1, BRD7, CBX1, CBX3 and CBX5. Part of a coactivator complex containing TRIM24, NCOA2/GRIP1 and CARM1. Interacts with p53/TP53 and PML. Sumoylated. In terms of processing, phosphorylated at Ser-768 by ATM kinase induces ubiquitination and degradation during DNA damage. Post-translationally, undergoes ubiquitination-mediated degradation in response to DNA damage. Detected in embryonic and adult liver. Detected in zygote and throughout embryogenesis (at protein level). Detected in all adult tissues, with the highest expression level in testis.

The protein localises to the nucleus. It localises to the cytoplasm. The catalysed reaction is S-ubiquitinyl-[E2 ubiquitin-conjugating enzyme]-L-cysteine + [acceptor protein]-L-lysine = [E2 ubiquitin-conjugating enzyme]-L-cysteine + N(6)-ubiquitinyl-[acceptor protein]-L-lysine.. Its pathway is protein modification; protein ubiquitination. In terms of biological role, transcriptional coactivator that interacts with numerous nuclear receptors and coactivators and modulates the transcription of target genes. Interacts with chromatin depending on histone H3 modifications, having the highest affinity for histone H3 that is both unmodified at 'Lys-4' (H3K4me0) and acetylated at 'Lys-23' (H3K23ac). Has E3 protein-ubiquitin ligase activity. Promotes ubiquitination and proteasomal degradation of p53/TP53. Plays a role in the regulation of cell proliferation and apoptosis via its effects on p53/TP53 levels. Up-regulates ligand-dependent transcription activation by AR, GCR/NR3C1, thyroid hormone receptor (TR) and ESR1. Modulates transcription activation by retinoic acid (RA) receptors, such as RARA. Plays a role in regulating retinoic acid-dependent proliferation of hepatocytes. Required for normal transition from proliferating neonatal hepatocytes to quiescent adult hepatocytes. Transcriptional coactivator that interacts with numerous nuclear receptors and coactivators and modulates the transcription of target genes. Interacts with chromatin depending on histone H3 modifications, having the highest affinity for histone H3 that is both unmodified at 'Lys-4' (H3K4me0) and acetylated at 'Lys-23' (H3K23ac). Has E3 protein-ubiquitin ligase activity. During the DNA damage response, participates in an autoregulatory feedback loop with TP53. Early in response to DNA damage, ATM kinase phosphorylates TRIM24 leading to its ubiquitination and degradation. After sufficient DNA repair has occurred, TP53 activates TRIM24 transcription, ultimately leading to TRIM24-mediated TP53 ubiquitination and degradation. Plays a role in the regulation of cell proliferation and apoptosis, at least in part via its effects on p53/TP53 levels. Up-regulates ligand-dependent transcription activation by AR, GCR/NR3C1, thyroid hormone receptor (TR) and ESR1. Modulates transcription activation by retinoic acid (RA) receptors, including RARA. Plays a role in regulating retinoic acid-dependent proliferation of hepatocytes. Also participates in innate immunity by mediating the specific 'Lys-63'-linked ubiquitination of TRAF3 leading to activation of downstream signal transduction of the type I IFN pathway. Additionally, negatively regulates NLRP3/CASP1/IL-1beta-mediated pyroptosis and cell migration probably by ubiquitinating NLRP3. The polypeptide is Transcription intermediary factor 1-alpha (Trim24) (Mus musculus (Mouse)).